A 548-amino-acid chain; its full sequence is 2-succinyl-5-enolpyruvyl-6-hydroxy-3-cyclohexene-1-carboxylate synthase (548 aa).

This sequence belongs to the TPP enzyme family. MenD subfamily. In terms of assembly, homodimer. It depends on Mg(2+) as a cofactor. Requires Mn(2+) as cofactor. Thiamine diphosphate is required as a cofactor.

It carries out the reaction isochorismate + 2-oxoglutarate + H(+) = 5-enolpyruvoyl-6-hydroxy-2-succinyl-cyclohex-3-ene-1-carboxylate + CO2. Its pathway is quinol/quinone metabolism; 1,4-dihydroxy-2-naphthoate biosynthesis; 1,4-dihydroxy-2-naphthoate from chorismate: step 2/7. The protein operates within quinol/quinone metabolism; menaquinone biosynthesis. Its function is as follows. Catalyzes the thiamine diphosphate-dependent decarboxylation of 2-oxoglutarate and the subsequent addition of the resulting succinic semialdehyde-thiamine pyrophosphate anion to isochorismate to yield 2-succinyl-5-enolpyruvyl-6-hydroxy-3-cyclohexene-1-carboxylate (SEPHCHC). This is 2-succinyl-5-enolpyruvyl-6-hydroxy-3-cyclohexene-1-carboxylate synthase from Mycolicibacterium vanbaalenii (strain DSM 7251 / JCM 13017 / BCRC 16820 / KCTC 9966 / NRRL B-24157 / PYR-1) (Mycobacterium vanbaalenii).